Here is a 362-residue protein sequence, read N- to C-terminus: MSENGSFANCCEAGGWAVRPGWSGAGSARPSRTPRPPWVAPALSAVLIVTTAVDVVGNLLVILSVLRNRKLRNAGNLFLVSLALADLVVAFYPYPLILVAIFYDGWALGEEHCKASAFVMGLSVIGSVFNITAIAINRYCYICHSMAYHRIYRRWHTPLHICLIWLLTVVALLPNFFVGSLEYDPRIYSCTFIQTASTQYTAAVVVIHFLLPIAVVSFCYLRIWVLVLQARRKAKPESRLCLKPSDLRSFLTMFVVFVIFAICWAPLNCIGLAVAINPQEMAPQIPEGLFVTSYLLAYFNSCLNAIVYGLLNQNFRREYKRILLALWNPRHCIQDASKGSHAEGLQSPAPPIIGVQHQADAL.

The Extracellular segment spans residues 1-42; it reads MSENGSFANCCEAGGWAVRPGWSGAGSARPSRTPRPPWVAPA. N-linked (GlcNAc...) asparagine glycosylation occurs at asparagine 4. The chain crosses the membrane as a helical span at residues 43-63; that stretch reads LSAVLIVTTAVDVVGNLLVIL. At 64-76 the chain is on the cytoplasmic side; that stretch reads SVLRNRKLRNAGN. Residues 77–97 form a helical membrane-spanning segment; sequence LFLVSLALADLVVAFYPYPLI. At 98 to 115 the chain is on the extracellular side; the sequence is LVAIFYDGWALGEEHCKA. Residues cysteine 113 and cysteine 190 are joined by a disulfide bond. The chain crosses the membrane as a helical span at residues 116–136; that stretch reads SAFVMGLSVIGSVFNITAIAI. The Cytoplasmic segment spans residues 137–155; it reads NRYCYICHSMAYHRIYRRW. The chain crosses the membrane as a helical span at residues 156-176; the sequence is HTPLHICLIWLLTVVALLPNF. Melatonin is bound by residues asparagine 175 and glutamine 194. Residues 177–200 lie on the Extracellular side of the membrane; the sequence is FVGSLEYDPRIYSCTFIQTASTQY. Residues 201–221 form a helical membrane-spanning segment; it reads TAAVVVIHFLLPIAVVSFCYL. At 222 to 253 the chain is on the cytoplasmic side; the sequence is RIWVLVLQARRKAKPESRLCLKPSDLRSFLTM. The chain crosses the membrane as a helical span at residues 254–274; it reads FVVFVIFAICWAPLNCIGLAV. Residues 275-287 are Extracellular-facing; that stretch reads AINPQEMAPQIPE. A helical transmembrane segment spans residues 288-308; it reads GLFVTSYLLAYFNSCLNAIVY. Residues 309 to 362 lie on the Cytoplasmic side of the membrane; it reads GLLNQNFRREYKRILLALWNPRHCIQDASKGSHAEGLQSPAPPIIGVQHQADAL.

The protein belongs to the G-protein coupled receptor 1 family. In terms of assembly, interacts with GPR61, GPR62 and GPR135. Expressed in retina and less in brain and hippocampus.

It is found in the cell membrane. Its function is as follows. High affinity receptor for melatonin. Likely to mediate the reproductive and circadian actions of melatonin. The activity of this receptor is mediated by pertussis toxin sensitive G proteins that inhibit adenylate cyclase activity. The protein is Melatonin receptor type 1B (MTNR1B) of Homo sapiens (Human).